Consider the following 470-residue polypeptide: Choline/ethanolamine transporter flvcr2a (470 aa).

Topologically, residues 1-23 (MCDKADNHIDVQPEGNLEVSSVS) are cytoplasmic. The helical transmembrane segment at 24 to 48 (STRLYRRRWVILLLFSSYSLCNAFQ) threads the bilayer. Choline is bound by residues asparagine 45, alanine 46, and tryptophan 49. At 49 to 66 (WIQYGIINNIFMKFYQVS) the chain is on the extracellular side. Residues 67–94 (SFAVDWLSMVYMLTYIPFIFPVTWLLER) traverse the membrane as a helical segment. The Cytoplasmic portion of the chain corresponds to 95–96 (KG). Residues 97-116 (LRVVALLAASINCAGTWIKV) traverse the membrane as a helical segment. Residues 117-123 (ASVQPSL) are Extracellular-facing. A helical transmembrane segment spans residues 124-152 (FWVTMLGQFACSCAQVFILGMPSQVASVW). Positions 138 and 142 each coordinate choline. The Cytoplasmic portion of the chain corresponds to 153–157 (FGSDE). Residues 158-183 (VSTACAIGVFGNQLGIAIGFLVPPVL) form a helical membrane-spanning segment. The Extracellular segment spans residues 184–188 (VPNVE). Residues 189–218 (DMGELAEHISIMFYITAAVATLIFLLVVFV) traverse the membrane as a helical segment. The Cytoplasmic segment spans residues 219 to 254 (FQEKPETPPSLAQVALRNMPTGQHSYLASIARLMCN). A helical transmembrane segment spans residues 255-285 (KPFILLLISYGLNVGSFYAVSTLLNRMIIEH). Tyrosine 272 lines the choline pocket. The Extracellular segment spans residues 286 to 289 (YPGE). The helical transmembrane segment at 290–318 (EVNAGRIGLTLVVAGVVGSLICGVWLDKT) threads the bilayer. The Cytoplasmic segment spans residues 319–320 (KT). The chain crosses the membrane as a helical span at residues 321-343 (YKQTTLSVYLLSFVGMLIYSFTL). The Extracellular segment spans residues 344-346 (NLG). A helical membrane pass occupies residues 347-376 (HLWLVFLTSGVLGFFMTGYLPLGFEFAVEL). The Cytoplasmic segment spans residues 377–384 (TYPESEGT). The helical transmembrane segment at 385–410 (SSGLLNCSAQVFGIAFTIIQGKIIDH) threads the bilayer. Glutamine 394 contributes to the choline binding site. Topologically, residues 411-412 (FG) are extracellular. The helical transmembrane segment at 413–435 (TLAGNIFLCVFLLIGSIMTAFIK) threads the bilayer. Topologically, residues 436 to 470 (SDLRRQKANQETGGNADSSVHPQHGETLPVKEVKM) are cytoplasmic. Residues 445-456 (QETGGNADSSVH) show a composition bias toward polar residues. The disordered stretch occupies residues 445 to 470 (QETGGNADSSVHPQHGETLPVKEVKM).

Belongs to the major facilitator superfamily. Feline leukemia virus subgroup C receptor (TC 2.A.1.28.1) family.

Its subcellular location is the cell membrane. It localises to the mitochondrion membrane. The protein localises to the endoplasmic reticulum membrane. The enzyme catalyses choline(out) = choline(in). It carries out the reaction ethanolamine(in) = ethanolamine(out). It catalyses the reaction heme b(in) = heme b(out). In terms of biological role, choline uniporter that specifically mediates choline uptake at the blood-brain-barrier. Responsible for the majority of choline uptake across the blood-brain-barrier from the circulation into the brain. Choline, a nutrient critical for brain development, is a precursor of phosphatidylcholine, as well as betaine. Also mediates transport of ethanolamine. Choline and ethanolamine transport is not coupled with proton transport and is exclusively driven by the choline gradient across the plasma membrane. Also acts as a heme b transporter. This chain is Choline/ethanolamine transporter flvcr2a, found in Danio rerio (Zebrafish).